A 308-amino-acid chain; its full sequence is tRNA pseudouridine synthase B (308 aa).

Residue Asp-47 is the Nucleophile of the active site.

It belongs to the pseudouridine synthase TruB family. Type 1 subfamily.

It catalyses the reaction uridine(55) in tRNA = pseudouridine(55) in tRNA. In terms of biological role, responsible for synthesis of pseudouridine from uracil-55 in the psi GC loop of transfer RNAs. The polypeptide is tRNA pseudouridine synthase B (Xanthomonas oryzae pv. oryzae (strain MAFF 311018)).